The primary structure comprises 117 residues: Ribosome-binding factor A (117 aa).

The protein belongs to the RbfA family. As to quaternary structure, monomer. Binds 30S ribosomal subunits, but not 50S ribosomal subunits or 70S ribosomes.

The protein resides in the cytoplasm. Its function is as follows. One of several proteins that assist in the late maturation steps of the functional core of the 30S ribosomal subunit. Associates with free 30S ribosomal subunits (but not with 30S subunits that are part of 70S ribosomes or polysomes). Required for efficient processing of 16S rRNA. May interact with the 5'-terminal helix region of 16S rRNA. In Lactiplantibacillus plantarum (strain ATCC BAA-793 / NCIMB 8826 / WCFS1) (Lactobacillus plantarum), this protein is Ribosome-binding factor A.